The chain runs to 510 residues: NAD(P)H-quinone oxidoreductase subunit 2 A, chloroplastic (510 aa).

Transmembrane regions (helical) follow at residues 24–44 (LLLFHGSFIFPECILIFGLIL), 59–79 (WFYFISSTSLVMSITALLFRW), 99–119 (IFQFLILLCSTLCIPLSVEYI), 124–144 (MAITEFLLFVLTATLGGMFLC), 149–169 (LITIFVAPECFSLCSYLLSGY), 183–203 (YLLMGGASSSILVHGFSWLYG), 229–249 (ISIALLSITVGIGFKLSPAPF), 295–315 (WHLLLEILAILSMILGNLIAI), 323–343 (MLAYSSIGQIGYVIIGIIVGD), 347–367 (GYASMITYMLFYISMNLGTFA), 395–415 (ALSSALCLLSLGGIPPLAGFF), 418–438 (LHLFWCGWQAGLYFLVSIGLL), and 484–504 (MIVCVIASTIPGISMNPIIAI).

It belongs to the complex I subunit 2 family. NDH is composed of at least 16 different subunits, 5 of which are encoded in the nucleus.

The protein localises to the plastid. It localises to the chloroplast thylakoid membrane. It carries out the reaction a plastoquinone + NADH + (n+1) H(+)(in) = a plastoquinol + NAD(+) + n H(+)(out). It catalyses the reaction a plastoquinone + NADPH + (n+1) H(+)(in) = a plastoquinol + NADP(+) + n H(+)(out). Its function is as follows. NDH shuttles electrons from NAD(P)H:plastoquinone, via FMN and iron-sulfur (Fe-S) centers, to quinones in the photosynthetic chain and possibly in a chloroplast respiratory chain. The immediate electron acceptor for the enzyme in this species is believed to be plastoquinone. Couples the redox reaction to proton translocation, and thus conserves the redox energy in a proton gradient. In Amborella trichopoda, this protein is NAD(P)H-quinone oxidoreductase subunit 2 A, chloroplastic.